A 124-amino-acid chain; its full sequence is Small ribosomal subunit protein uS13 (124 aa).

Residues 94–124 form a disordered region; it reads RGMPVRGQRTKTNARTRKGPKRTIAGKKKAR.

It belongs to the universal ribosomal protein uS13 family. In terms of assembly, part of the 30S ribosomal subunit. Forms a loose heterodimer with protein S19. Forms two bridges to the 50S subunit in the 70S ribosome.

Located at the top of the head of the 30S subunit, it contacts several helices of the 16S rRNA. In the 70S ribosome it contacts the 23S rRNA (bridge B1a) and protein L5 of the 50S subunit (bridge B1b), connecting the 2 subunits; these bridges are implicated in subunit movement. Contacts the tRNAs in the A and P-sites. The chain is Small ribosomal subunit protein uS13 from Mycobacterium tuberculosis (strain ATCC 25177 / H37Ra).